We begin with the raw amino-acid sequence, 472 residues long: MSNMEHDRWSRVKGRLRSSVGEDVYSSWFARMDLEAVQPESVHLSVPTRFLKSWIQTHYSDKVLTCWQAELPEVCRIDLTVRSPMRAAVAKEAAAPVEHRRAEHRPATETRSHATVPASSNHDALGGSPLDPRLTFASFVVGRSNTLAHAAAKQVAEGRRGDPVMFNPLYIHSGVGLGKTHLLQAVTWAGNTGIERKVLYLTAEKFMYGFVAALKTQTSLAFKEALRGIDVLVIDDLQFLQGKTTQAEFCHTLNALIDAGRQVVVAADRPPSDLESLDERVRSRLAGGLVVEMAPLGEDLRLGILKSRVVAARAHHASFDVPAPVLEYLARAITHNGRDLEGAINRLLAHSKLNAQPVTLEMAEHEVRDLIRPQEPKRIKIEDIQRIVARQYNVSRSDLLSSRRTANVVRPRQVAMYLAKTLTLRSLPEIGRRFGGRDHTTVLHAVRKIEGLVSKDTTLSDEVDSLKRQLQE.

Residues 1–73 form a domain I, interacts with DnaA modulators region; it reads MSNMEHDRWS…LTCWQAELPE (73 aa). The tract at residues 73–128 is domain II; that stretch reads EVCRIDLTVRSPMRAAVAKEAAAPVEHRRAEHRPATETRSHATVPASSNHDALGGS. Residues 92-127 form a disordered region; that stretch reads EAAAPVEHRRAEHRPATETRSHATVPASSNHDALGG. The span at 97–112 shows a compositional bias: basic and acidic residues; the sequence is VEHRRAEHRPATETRS. A domain III, AAA+ region region spans residues 129–351; sequence PLDPRLTFAS…GAINRLLAHS (223 aa). Residues G176, G178, K179, and T180 each coordinate ATP. Positions 352–472 are domain IV, binds dsDNA; the sequence is KLNAQPVTLE…VDSLKRQLQE (121 aa).

It belongs to the DnaA family. Oligomerizes as a right-handed, spiral filament on DNA at oriC.

Its subcellular location is the cytoplasm. Plays an essential role in the initiation and regulation of chromosomal replication. ATP-DnaA binds to the origin of replication (oriC) to initiate formation of the DNA replication initiation complex once per cell cycle. Binds the DnaA box (a 9 base pair repeat at the origin) and separates the double-stranded (ds)DNA. Forms a right-handed helical filament on oriC DNA; dsDNA binds to the exterior of the filament while single-stranded (ss)DNA is stabiized in the filament's interior. The ATP-DnaA-oriC complex binds and stabilizes one strand of the AT-rich DNA unwinding element (DUE), permitting loading of DNA polymerase. After initiation quickly degrades to an ADP-DnaA complex that is not apt for DNA replication. Binds acidic phospholipids. The sequence is that of Chromosomal replication initiator protein DnaA from Rhodopseudomonas palustris (strain HaA2).